We begin with the raw amino-acid sequence, 319 residues long: Probable carboxylesterase 5 (319 aa).

Met-1 carries the N-acetylmethionine modification. Residues 79-81 (HGG) carry the Involved in the stabilization of the negatively charged intermediate by the formation of the oxyanion hole motif. Active-site residues include Ser-163, Asp-262, and His-294.

The protein belongs to the 'GDXG' lipolytic enzyme family. As to expression, expressed in roots, leaves, stems, flowers and siliques.

It catalyses the reaction a carboxylic ester + H2O = an alcohol + a carboxylate + H(+). In terms of biological role, carboxylesterase acting on esters with varying acyl chain length. The polypeptide is Probable carboxylesterase 5 (CXE5) (Arabidopsis thaliana (Mouse-ear cress)).